Reading from the N-terminus, the 176-residue chain is Interleukin-7 (176 aa).

An N-terminal signal peptide occupies residues 1–25; that stretch reads MFHVSFRYIFGIPPLILVLLPVASS. 3 cysteine pairs are disulfide-bonded: Cys27–Cys165, Cys58–Cys153, and Cys71–Cys116. 3 N-linked (GlcNAc...) asparagine glycosylation sites follow: Asn94, Asn115, and Asn140. Residues 118–143 are disordered; the sequence is SKGKGRKPPSLSEAQPTKNLEENKSS.

It belongs to the IL-7/IL-9 family. In terms of assembly, interacts with IL7R and CSF2RG.

The protein resides in the secreted. Functionally, hematopoietic cytokine that plays an essential role in the development, expansion, and survival of naive and memory T-cells and B-cells thereby regulating the number of mature lymphocytes and maintaining lymphoid homeostasis. Mechanistically, exerts its biological effects through a receptor composed of IL7RA subunit and the cytokine receptor common subunit gamma/CSF2RG. Binding to the receptor leads to activation of various kinases including JAK1 or JAK3 depending on the cell type and subsequently propagation of signals through activation of several downstream signaling pathways including the PI3K/Akt/mTOR or the JAK-STAT5. The chain is Interleukin-7 (IL7) from Bos taurus (Bovine).